The following is a 107-amino-acid chain: Transcription initiation factor IIA subunit 2-2 (107 aa).

This sequence belongs to the TFIIA subunit 2 family. As to quaternary structure, TFIIA is a heterodimer of the large unprocessed subunit 1 and a small subunit gamma. It was originally believed to be a heterotrimer of an alpha (p30), a beta (p20) and a gamma (p14) subunit.

The protein localises to the nucleus. Its function is as follows. TFIIA is a component of the transcription machinery of RNA polymerase II and plays an important role in transcriptional activation. TFIIA in a complex with TBP mediates transcriptional activity. In Drosophila melanogaster (Fruit fly), this protein is Transcription initiation factor IIA subunit 2-2 (TfIIA-S-2).